An 817-amino-acid chain; its full sequence is Probable beta-glucosidase G (817 aa).

Residues 1–20 (MANIAHLIVSGLLAATVAHG) form the signal peptide. N-linked (GlcNAc...) asparagine glycans are attached at residues Asn40, Asn58, Asn229, and Asn276. Asp304 is a catalytic residue. Residues Asn343, Asn350, Asn402, Asn507, Asn563, Asn584, Asn623, Asn662, Asn679, and Asn715 are each glycosylated (N-linked (GlcNAc...) asparagine).

This sequence belongs to the glycosyl hydrolase 3 family.

It localises to the secreted. The enzyme catalyses Hydrolysis of terminal, non-reducing beta-D-glucosyl residues with release of beta-D-glucose.. Its pathway is glycan metabolism; cellulose degradation. Beta-glucosidases are one of a number of cellulolytic enzymes involved in the degradation of cellulosic biomass. Catalyzes the last step releasing glucose from the inhibitory cellobiose. The sequence is that of Probable beta-glucosidase G (bglG) from Aspergillus terreus (strain NIH 2624 / FGSC A1156).